A 363-amino-acid polypeptide reads, in one-letter code: MKRSLNENSARSTAGCLPVPLFNQKKRNRQPLTSNPLKDDPGISTPSDNYDFPPLPTDWAWEAMNAELAPVMKTVDTGQIPHSVPRPLRSQDSIFNSIQSNTERSQGGWSYSDNNKNTSLKTWNKNDFKPQCKRTNLVANDGKNSCPMSSGAQQQKQFGIPEPPNLPRNKETELLRQTHSSKISGSTMRGLDKNSALQTFKPNFQQNQYKKQMLDDIPEDNTLKETSLFQLQFKEKANSLRIISAVIESMKYWREHAQKTVLLFEVLAVLDSAVTPGPYYSKTFLMRDGKNTLPCVFFEIDRELPRLIRGRVHRCVGNYDQKKNIFKCVSVRPASVSEQKSFQAFVKIADVEMRYYINVMNET.

2 stretches are compositionally biased toward polar residues: residues 1–12 (MKRSLNENSARS) and 145–157 (SCPM…QQKQ). Disordered regions lie at residues 1-51 (MKRS…DNYD) and 145-169 (SCPM…LPRN).

In terms of assembly, component of a multiprotein complex with MEIOB and RPA2. Interacts with MEIOB. Interacts with the complex BRME1:HSF2BP:BRCA2. In terms of tissue distribution, expressed in testis.

The protein resides in the chromosome. Functionally, meiosis-specific protein required for homologous recombination in meiosis I. This Macaca fascicularis (Crab-eating macaque) protein is Spermatogenesis-associated protein 22 (SPATA22).